Here is a 195-residue protein sequence, read N- to C-terminus: CASP-like protein IN26 (195 aa).

At 1–26 (VAPTGSVETEKAGPSYKPKEYYKVTE) the chain is on the cytoplasmic side. The helical transmembrane segment at 27 to 47 (AILRLLLLASLVVAVVVMVTS) threads the bilayer. The Extracellular segment spans residues 48-75 (KETELISVKLDPFPPFMLPLTAKFTQSP). Residues 76 to 96 (AFIYFVAGLSVAGLYTIISTL) form a helical membrane-spanning segment. Residues 97 to 120 (ASFYNLLIKPGFCPALVSHFIILD) are Cytoplasmic-facing. A helical transmembrane segment spans residues 121 to 143 (VVMLGIVGTATGAAGGVAYIGLK). Residues 144 to 163 (GNSHVGWTKVCNKYGKLCTH) are Extracellular-facing. Residues 164–184 (LGASLAVSFFAFIVLLLLIIL) form a helical membrane-spanning segment. Residues 185 to 195 (SIHSLSKKIPK) lie on the Cytoplasmic side of the membrane.

Belongs to the Casparian strip membrane proteins (CASP) family. As to quaternary structure, homodimer and heterodimers.

The protein resides in the cell membrane. This is CASP-like protein IN26 (IN26) from Ipomoea nil (Japanese morning glory).